The primary structure comprises 256 residues: Ribonuclease 3 (256 aa).

One can recognise an RNase III domain in the interval 6–128; it reads LATLETRLDH…LFGAVFLDAG (123 aa). E41 serves as a coordination point for Mg(2+). D45 is an active-site residue. 2 residues coordinate Mg(2+): D114 and E117. Residue E117 is part of the active site. The DRBM domain maps to 155–225; sequence DAKTLLQEFL…AKVALEAAQA (71 aa).

This sequence belongs to the ribonuclease III family. In terms of assembly, homodimer. It depends on Mg(2+) as a cofactor.

It localises to the cytoplasm. It catalyses the reaction Endonucleolytic cleavage to 5'-phosphomonoester.. Its function is as follows. Digests double-stranded RNA. Involved in the processing of primary rRNA transcript to yield the immediate precursors to the large and small rRNAs (23S and 16S). Processes some mRNAs, and tRNAs when they are encoded in the rRNA operon. Processes pre-crRNA and tracrRNA of type II CRISPR loci if present in the organism. The sequence is that of Ribonuclease 3 from Bordetella bronchiseptica (strain ATCC BAA-588 / NCTC 13252 / RB50) (Alcaligenes bronchisepticus).